We begin with the raw amino-acid sequence, 706 residues long: MTIRNILVTSALPYANGSIHLGHLVEYIQTDIWVRFQKMQGHTVYYVCADDTHGTPVMLRAEKEGISPEALIARVHAEHLRDFTGFHIAFDQYYSTHSDETRYYAEDIYRKLKEAGLIAVRAIEQLYDPIKNLFLPDRFVKGECPKCGAAEQYGDSCEACGAAYTPTELKNPYSAVSGATPVRKTSEHFFFKLSDSRCADFLRRWTHEGNHLQAEAANKMAEWLGEAGENKLSDWDISRDAPYFGFEIPGETGKYFYVWLDAPIGYMGSFKKLCARKGIDFDAYWKKDSTTELYHFIGKDILYFHALFWPAMLENAGYRTPTQIFAHGFLTVNGEKMSKSRGTFITAESYLEQGLNPEWLRYYYAAKLNGSMEDIDLNLDDFVARVNSDLVGKYINIASRCAGFISKRFGGKLVSGEDYRLLQQMVDEHFAGWQPGVIEAAYEARDFSAAVRHIMRRADEVNELIHELAPWEIARDETRERELHRACSLGIQMFYLLSCYLKPILPRTAAQIEDFLNLGELSWQKQQAGQPLSDTLLPPGHVINPYQHLMTRIDPKQITALITANQQTMQQTMNTETESHSPQRHGQAQQHPVAPIAETISIEDFVKIDLRIARIVDAQHVPGADKLLQLTLDIGSEQRTVFAGIKSAYDPEQLKGRLTVMVANLAPRKMKFGLSEGMVLAASGENGGGPFLLAPDSGAQPGMRVK.

A 'HIGH' region motif is present at residues 13–23 (PYANGSIHLGH). Residues Cys144, Cys147, Cys157, and Cys160 each contribute to the Zn(2+) site. Residues 336–340 (KMSKS) carry the 'KMSKS' region motif. An ATP-binding site is contributed by Lys339. Residues 570 to 593 (QQTMNTETESHSPQRHGQAQQHPV) are disordered. The region spanning 604-706 (DFVKIDLRIA…SGAQPGMRVK (103 aa)) is the tRNA-binding domain.

The protein belongs to the class-I aminoacyl-tRNA synthetase family. MetG type 1 subfamily. In terms of assembly, homodimer. Zn(2+) serves as cofactor.

The protein resides in the cytoplasm. It catalyses the reaction tRNA(Met) + L-methionine + ATP = L-methionyl-tRNA(Met) + AMP + diphosphate. Its function is as follows. Is required not only for elongation of protein synthesis but also for the initiation of all mRNA translation through initiator tRNA(fMet) aminoacylation. In Nitrosomonas europaea (strain ATCC 19718 / CIP 103999 / KCTC 2705 / NBRC 14298), this protein is Methionine--tRNA ligase.